A 220-amino-acid chain; its full sequence is Deoxyribose-phosphate aldolase (220 aa).

Residue Asp-89 is the Proton donor/acceptor of the active site. The active-site Schiff-base intermediate with acetaldehyde is the Lys-151. Lys-180 functions as the Proton donor/acceptor in the catalytic mechanism.

This sequence belongs to the DeoC/FbaB aldolase family. DeoC type 1 subfamily.

It localises to the cytoplasm. The catalysed reaction is 2-deoxy-D-ribose 5-phosphate = D-glyceraldehyde 3-phosphate + acetaldehyde. The protein operates within carbohydrate degradation; 2-deoxy-D-ribose 1-phosphate degradation; D-glyceraldehyde 3-phosphate and acetaldehyde from 2-deoxy-alpha-D-ribose 1-phosphate: step 2/2. Catalyzes a reversible aldol reaction between acetaldehyde and D-glyceraldehyde 3-phosphate to generate 2-deoxy-D-ribose 5-phosphate. This chain is Deoxyribose-phosphate aldolase, found in Thermus thermophilus (strain ATCC BAA-163 / DSM 7039 / HB27).